A 416-amino-acid polypeptide reads, in one-letter code: ABSCISIC ACID-INSENSITIVE 5-like protein 5 (416 aa).

A disordered region spans residues 1–23; sequence MDGSMNLGNEPPGDGGGGGGLTR. Over residues 13–22 the composition is skewed to gly residues; it reads GDGGGGGGLT. Ser26, Ser45, and Ser86 each carry phosphoserine. A Phosphothreonine modification is found at Thr135. Residues 300–326 form a disordered region; it reads SEGIGKSNGDSSSLSPSPYMFNGGVRG. The bZIP domain maps to 336–399; that stretch reads VERRQRRMIK…KNQETEMRNL (64 aa). A basic motif region spans residues 338 to 357; it reads RRQRRMIKNRESAARSRARK. Residues 364-385 are leucine-zipper; the sequence is LEAEVAKLKEENDELQRKQARI. The segment at 388–416 is disordered; sequence MQKNQETEMRNLLQGGPKKKLRRTESGPW.

The protein belongs to the bZIP family. ABI5 subfamily. DNA-binding heterodimer. Interacts with ARIA. Post-translationally, the activation by phosphorylation is induced by abscisic acid (ABA). Phosphorylated by SRK2C, SRK2D, SRK2E, SRK2F and SRK2I in vitro. In terms of tissue distribution, expressed in roots, leaves, flowers and siliques but not in seeds.

The protein localises to the nucleus. Involved in ABA and stress responses and acts as a positive component of glucose signal transduction. Functions as a transcriptional activator in the ABA-inducible expression of rd29B. Binds specifically to the ABA-responsive element (ABRE) of the rd29B gene promoter. This chain is ABSCISIC ACID-INSENSITIVE 5-like protein 5 (ABF2), found in Arabidopsis thaliana (Mouse-ear cress).